A 413-amino-acid chain; its full sequence is S-adenosylmethionine synthase (413 aa).

His-15 lines the ATP pocket. Residue Asp-17 coordinates Mg(2+). Glu-43 provides a ligand contact to K(+). Residues Glu-56 and Gln-100 each coordinate L-methionine. Residues 100–110 (QSPDISQGVNE) form a flexible loop region. ATP contacts are provided by residues 171–173 (DGK), 248–249 (KF), Asp-257, 263–264 (RK), Ala-280, and Lys-284. L-methionine is bound at residue Asp-257. Lys-288 contacts L-methionine.

It belongs to the AdoMet synthase family. Homotetramer; dimer of dimers. Mg(2+) is required as a cofactor. The cofactor is K(+).

The protein localises to the cytoplasm. It catalyses the reaction L-methionine + ATP + H2O = S-adenosyl-L-methionine + phosphate + diphosphate. It participates in amino-acid biosynthesis; S-adenosyl-L-methionine biosynthesis; S-adenosyl-L-methionine from L-methionine: step 1/1. Its function is as follows. Catalyzes the formation of S-adenosylmethionine (AdoMet) from methionine and ATP. The overall synthetic reaction is composed of two sequential steps, AdoMet formation and the subsequent tripolyphosphate hydrolysis which occurs prior to release of AdoMet from the enzyme. This chain is S-adenosylmethionine synthase, found in Prochlorococcus marinus (strain MIT 9515).